We begin with the raw amino-acid sequence, 208 residues long: Uracil phosphoribosyltransferase (208 aa).

Residues Arg-78, Arg-103, and 130-138 (DPMLATGGS) each bind 5-phospho-alpha-D-ribose 1-diphosphate. Residues Ile-193 and 198 to 200 (GDA) each bind uracil. Asp-199 is a 5-phospho-alpha-D-ribose 1-diphosphate binding site.

This sequence belongs to the UPRTase family. It depends on Mg(2+) as a cofactor.

It catalyses the reaction UMP + diphosphate = 5-phospho-alpha-D-ribose 1-diphosphate + uracil. It participates in pyrimidine metabolism; UMP biosynthesis via salvage pathway; UMP from uracil: step 1/1. Its activity is regulated as follows. Allosterically activated by GTP. In terms of biological role, catalyzes the conversion of uracil and 5-phospho-alpha-D-ribose 1-diphosphate (PRPP) to UMP and diphosphate. This is Uracil phosphoribosyltransferase from Actinobacillus pleuropneumoniae serotype 5b (strain L20).